Reading from the N-terminus, the 115-residue chain is DNA-binding protein STK_13740 (115 aa).

This sequence belongs to the PDCD5 family.

In Sulfurisphaera tokodaii (strain DSM 16993 / JCM 10545 / NBRC 100140 / 7) (Sulfolobus tokodaii), this protein is DNA-binding protein STK_13740.